The following is a 1915-amino-acid chain: MKFKKELINILALIFVLKKNIFAQSICPTGYQMTQGSCTAIQCPNGQYYDSNLGLCANCDQACSACNYYPTYCTQCQNGFYLYQNQCLTQCPQAQTYVSCSGSSCICQACDSSCTQCFGNKNTQCLACSVGFYYNQINSSCLKQCEDGYTQQIVNIGASQQLLCIPCDNNCRTCSQTNAQQCLTCKDNMYLNTATNQCVSTCPQLQYKINGICKICPTGCQTCYNTNPSNPSTVESCLSCVSGYFLDIENQLCVKNCVSGYVVDAATQRCLPCNATCKNCSDQTNQGCLQCQNGYSLTSGSPSSCQNNCPNGNYQNSSLCLSCNTACSECFGADNQQCTACKTGYYLYKTQCLVICPVGFYTFARQYADPLKQPICDYCPNEMEQCEQDKSNFDLIKPILCKRGYYLYNGTCVKTCPDQTYYQDEATRSCLPCVFPCQTCLSASVCLTCATYTPNGQVQGQTYIFAQITYNGPQGTVFQQNCVPACPKGFYQNSKNNSCQVCNQQCQTCQGPAQTDCITCQIYDSNNMLFKYNNQCYYTCPSSQNNPMYGDKTTQACLPCSQECSSCFNGNNKSCYSCMNGYFLEYLKPECKSFCASDGTYMNSSTNQCSLCGFGCSSCTNGTFNSCISCLNGYYLQQNYNVCYPCPQQCASCTDMNTCQSCNQGYFLYSQTNSCVQQCPLIGFYVDTTQQACIPCDASCLECYGGANNQCISCPKGSYLKTDGTCQQCSQCSSNNECLGPNITDCLNQPICKPGQYLYDGQCLTCFPYCSTCSGTTYDSCISCQTTTDYTLLFDVCKKKVSQTDTQCDIGFYYDSVNKQCYSCHQNCIQCFGKSSSQCTKCSSGYLLHLDITTCSSTCLDGYYQQDPSIPQCSPCLYNCINGCSSGYQFLLGLCFTQCPFGTTAQKENCSFNSKPSIQFAQNLGNSVNNNSQTISLQLLVYSKNLFSIKWRLFTGNTDISNGPIQSYIQNRFDYIVFPPKSLQSNTQYTIQASILDLANNCQNENDCMVQQTFQTMNAITKGNFNIEINSAYLQLTLIISGWLFNSVPDNISFDLYVKLTGNDYFFFDKGQNYQDGRFTYLIPNLSYDLQDNKAQFFLVIYNDFDVQIQQLLIALNLNLQQTTISIDEFLDSVYSKITTLQQIQSLSYQFYSQMQNLMSSQTTSQTIFNRHLFYQVYSSLKGVQIPCDSNINCSGNGKCLWSQDNYNEILCICNINYAGRYCEFQSYQLDIARQHLIALTDLISNIPLNKSSDLFFTIEVLLELTYFYSIFDEFTLNTLINVYFQVFNQLQRVQSNISDEKILFKISKLTSQLINLINEDQTLSYNDQQSLLMKTMNDFDSQINLYLQNFAKSFDDLKSQEQVQTSFQTDISNINLNLIYQNDLLDAFMSNNGASDGQQQTPIVFYGDQISYTFDITQFSPKSSLSTAVIKWNSNPFLSQSQYQAPFISCITELVIYSQQTEIQISTVSQIVEIAIPKILPTPILSVIRPFYQPYTCIYFDSVSQVYKQDGVQYLRENSTHVICGSEQISGNYGVIVNQEYIDPNLSLTVIWNATQQIYANDQQFINFINQLINSNNNNGTNENPQVSQSSFNPNLSLLYALLIYIIFITIFIVISIIRDRKDQETYIKESDSYWLVHPIYSLIFGPYSSFFPRLQRSINYAQLIINLFLYNAIFVLVYSLPSEQELQQNVGKRQIISIQISSTSVACSIVTYYLTICMVNLFKMKWYIKQKWLDFKQDKITTEIVEQVTKSLKIFHLMNYGLVFMLQAGMGIPIIILILSFNSQQNQFFFTSVFASFVIDNILDIIILISFCFIKIFSQSEKSKIILLFTLRGFYYPVYEFLDIEDKIKEYQQKGEVLPAEEANNQSDDEDIFEINDHMNTPKRIFKKNEEKIDKAQEEIQLNEFVNNLKTNQ.

The first 23 residues, 1–23 (MKFKKELINILALIFVLKKNIFA), serve as a signal peptide directing secretion. FU repeat units lie at residues 53–98 (LGLC…QTYV), 104–151 (SCIC…GYTQ), 161–208 (QLLC…LQYK), 210–263 (NGIC…GYVV), and 267–315 (TQRC…GNYQ). N-linked (GlcNAc...) asparagine glycosylation occurs at asparagine 138. Residues asparagine 274, asparagine 279, and asparagine 316 are each glycosylated (N-linked (GlcNAc...) asparagine). FU repeat units follow at residues 317–362 (SSLC…GFYT), 373–422 (QPIC…QTYY), 427–492 (TRSC…GFYQ), 496–546 (NNSC…SQNN), and 554–602 (TQAC…GTYM). Asparagine 409 carries an N-linked (GlcNAc...) asparagine glycan. N-linked (GlcNAc...) asparagine glycans are attached at residues asparagine 496, asparagine 572, asparagine 603, and asparagine 621. FU repeat units follow at residues 606–639 (TNQC…LQQN), 640–686 (YNVC…GFYV), and 690–739 (QQAC…NECL). Residue asparagine 742 is glycosylated (N-linked (GlcNAc...) asparagine). FU repeat units follow at residues 760–814 (DGQC…GFYY) and 818–865 (NKQC…GYYQ). N-linked (GlcNAc...) asparagine glycosylation is found at asparagine 909, asparagine 930, asparagine 1051, asparagine 1085, and asparagine 1193. The EGF-like domain occupies 1184 to 1224 (VQIPCDSNINCSGNGKCLWSQDNYNEILCICNINYAGRYCE). Disulfide bonds link cysteine 1188-cysteine 1200, cysteine 1194-cysteine 1212, and cysteine 1214-cysteine 1223. N-linked (GlcNAc...) asparagine glycosylation is found at asparagine 1250, asparagine 1297, asparagine 1519, asparagine 1546, asparagine 1554, asparagine 1580, and asparagine 1596. Helical transmembrane passes span 1599–1619 (LLYA…ISII), 1662–1682 (YAQL…VYSL), 1704–1724 (STSV…VNLF), 1763–1783 (GLVF…ILSF), and 1796–1816 (FASF…FCFI). Asparagine 1867 carries N-linked (GlcNAc...) asparagine glycosylation.

The protein resides in the membrane. Functionally, required for mucocyst secretion. This Tetrahymena thermophila (strain SB210) protein is Cysteine repeat modular protein 2.